Consider the following 548-residue polypeptide: MPHDRKNSSRRAWAALCAAVLAVSGALVGVAAPASAVPATIPLTITNDSGRGPIYLYVLGERDGVAGWADAGGTFHPWPGGVGPVPVPAPDASIAGPGPGQSVTIRLPKLSGRVYYSYGQKMTFQIVLDGRLVQPAVQNDSDPNRNILFNWTEYTLNDGGLWINSTQVDHWSAPYQVGVQRADGQVLSTGMLKPNGYEAFYTALEGAGWGGLVQRAPDGSRLRALNPSHGIDVGKISSASIDSYVTEVWNSYRTRDMVVTPFSHEPGTQFRGRVDGDWFRFRSGSGQEVAAFKKPDASSVYGCHKDLQAPNDHVVGPIARTLCAALVRTTALTNPNQPDANSAGFYQDARTNVYAKLAHQQMANGKAYAFAFDDVGAHESLVHDGNPQAAYIKLDPFTGTATPLGNGGSTEQPGTPGGLPAGTGALRIGSTLCLDVPWADPTDTNQVQLATCSGNAAQQWTRGTDGTVRALGKCLDVARSGTADGTAVWIYTCNGTGAQKWTYDSATKALRNPQSGKCLDAQGGAPLRDGQKVQLWTCNQTEAQRWTL.

A signal peptide (tat-type signal) is located at residues 1-36 (MPHDRKNSSRRAWAALCAAVLAVSGALVGVAAPASA). The tract at residues 37–430 (VPATIPLTIT…AGTGALRIGS (394 aa)) is possesses beta-glucanase activity, but is unable to lyse viable cells. The 359-residue stretch at 38 to 396 (PATIPLTITN…PQAAYIKLDP (359 aa)) folds into the GH64 domain. The active-site Proton donor is Glu153. The active-site Proton acceptor is Asp169. The Ricin B-type lectin domain maps to 422–548 (GTGALRIGST…NQTEAQRWTL (127 aa)). An essential for the lytic activity, but not for the beta-glucanase function region spans residues 472–548 (GKCLDVARSG…NQTEAQRWTL (77 aa)).

It belongs to the glycosyl hydrolase 64 family. Post-translationally, predicted to be exported by the Tat system. The position of the signal peptide cleavage has been experimentally proven.

It localises to the periplasm. It carries out the reaction Hydrolysis of (1-&gt;3)-beta-D-glucosidic linkages in (1-&gt;3)-beta-D-glucans.. Lysis of cellular walls containing beta-1,3-glucans. Implicated in the defense against fungal pathogens. The protein is Glucan endo-1,3-beta-glucosidase of Cellulosimicrobium cellulans (Arthrobacter luteus).